The primary structure comprises 267 residues: Ribosomal RNA small subunit methyltransferase A (267 aa).

Positions 18, 20, 45, 66, 91, and 112 each coordinate S-adenosyl-L-methionine.

Belongs to the class I-like SAM-binding methyltransferase superfamily. rRNA adenine N(6)-methyltransferase family. RsmA subfamily.

The protein resides in the cytoplasm. The enzyme catalyses adenosine(1518)/adenosine(1519) in 16S rRNA + 4 S-adenosyl-L-methionine = N(6)-dimethyladenosine(1518)/N(6)-dimethyladenosine(1519) in 16S rRNA + 4 S-adenosyl-L-homocysteine + 4 H(+). Functionally, specifically dimethylates two adjacent adenosines (A1518 and A1519) in the loop of a conserved hairpin near the 3'-end of 16S rRNA in the 30S particle. May play a critical role in biogenesis of 30S subunits. This chain is Ribosomal RNA small subunit methyltransferase A, found in Shewanella woodyi (strain ATCC 51908 / MS32).